The following is a 73-amino-acid chain: Translation initiation factor IF-1 (73 aa).

The 72-residue stretch at 1-72 folds into the S1-like domain; that stretch reads MAKDDVIEVE…TKGRITYRFI (72 aa).

It belongs to the IF-1 family. In terms of assembly, component of the 30S ribosomal translation pre-initiation complex which assembles on the 30S ribosome in the order IF-2 and IF-3, IF-1 and N-formylmethionyl-tRNA(fMet); mRNA recruitment can occur at any time during PIC assembly.

It is found in the cytoplasm. Its function is as follows. One of the essential components for the initiation of protein synthesis. Stabilizes the binding of IF-2 and IF-3 on the 30S subunit to which N-formylmethionyl-tRNA(fMet) subsequently binds. Helps modulate mRNA selection, yielding the 30S pre-initiation complex (PIC). Upon addition of the 50S ribosomal subunit IF-1, IF-2 and IF-3 are released leaving the mature 70S translation initiation complex. In Lactobacillus acidophilus (strain ATCC 700396 / NCK56 / N2 / NCFM), this protein is Translation initiation factor IF-1.